The following is an 870-amino-acid chain: Aminopeptidase N (870 aa).

Substrate is bound by residues Glu-121 and Gly-261 to Asn-265. Residue His-297 coordinates Zn(2+). Catalysis depends on Glu-298, which acts as the Proton acceptor. Zn(2+)-binding residues include His-301 and Glu-320.

It belongs to the peptidase M1 family. Zn(2+) is required as a cofactor.

It is found in the cell inner membrane. The enzyme catalyses Release of an N-terminal amino acid, Xaa-|-Yaa- from a peptide, amide or arylamide. Xaa is preferably Ala, but may be most amino acids including Pro (slow action). When a terminal hydrophobic residue is followed by a prolyl residue, the two may be released as an intact Xaa-Pro dipeptide.. In terms of biological role, aminopeptidase N is involved in the degradation of intracellular peptides generated by protein breakdown during normal growth as well as in response to nutrient starvation. This Escherichia coli (strain K12) protein is Aminopeptidase N (pepN).